Here is a 574-residue protein sequence, read N- to C-terminus: Serine/threonine-protein kinase B (574 aa).

Residues tyrosine 34–tyrosine 301 form the Protein kinase domain. ATP is bound by residues leucine 40–threonine 48 and lysine 65. Aspartate 163 serves as the catalytic Proton acceptor. Residues glycine 319 to aspartate 407 are disordered. Positions threonine 343 to lysine 364 are enriched in polar residues. 2 consecutive Pentapeptide repeat domains span residues glutamine 454–lysine 493 and alanine 504–glycine 543.

It belongs to the protein kinase superfamily. Ser/Thr protein kinase family. Post-translationally, autophosphorylated.

The catalysed reaction is L-seryl-[protein] + ATP = O-phospho-L-seryl-[protein] + ADP + H(+). It catalyses the reaction L-threonyl-[protein] + ATP = O-phospho-L-threonyl-[protein] + ADP + H(+). Protein kinase required for cell motility, but not for phototaxis. This is Serine/threonine-protein kinase B (spkB) from Synechocystis sp. (strain ATCC 27184 / PCC 6803 / Kazusa).